Consider the following 428-residue polypeptide: Spliceosome RNA helicase DDX39B (428 aa).

Residues Met1–Glu19 show a composition bias toward acidic residues. Positions Met1–Lys32 are disordered. At Ala2 the chain carries N-acetylalanine. N6-acetyllysine; alternate is present on Lys36. Residue Lys36 forms a Glycyl lysine isopeptide (Lys-Gly) (interchain with G-Cter in SUMO2); alternate linkage. 2 positions are modified to phosphoserine: Ser38 and Ser41. The Q motif motif lies at Ser45–His73. The Helicase ATP-binding domain maps to Ile76–Ile249. Position 89 to 96 (Ala89 to Thr96) interacts with ATP. The residue at position 172 (Thr172) is a Phosphothreonine. Positions Asp196 to Asp199 match the DECD box motif. The region spanning Gly261–Ser422 is the Helicase C-terminal domain.

It belongs to the DEAD box helicase family. DECD subfamily. In terms of assembly, homodimer, and heterodimer with DDX39A. DDX39B interacts with the THO subcomplex to form the THO-DDX39B complex which multimerizes into a 28-subunit tetrameric assembly. Component of the transcription/export (TREX) complex at least composed of ALYREF/THOC4, DDX39B, SARNP/CIP29, CHTOP and the THO subcomplex; in the complex interacts with THOC2. THOC1-THOC2-THOC3-DDX39B subcomplex is sufficient for the interaction with export factor NXF1-NXT1. TREX seems to have a dynamic structure involving ATP-dependent remodeling. Within the TREX complex bridges ALYREF/THOC4 and the THO subcomplex, and, in a ATP-dependent manner, ALYREF/THOC4 and SARNP/CIP29. Component of the spliceosome. Interacts directly with U2AF2. Interacts with RBM8A, RNPS1 and SRRM1, FYTTD1/UIF, THOC1, MX1 and POLDIP3. Interacts with LUZP4. Interacts with SARNP/CIP29 (via the C-terminal domain); the interaction is direct and facilitates RNA binding of DDX39B.

It localises to the nucleus. The protein resides in the nucleus speckle. It is found in the cytoplasm. The catalysed reaction is ATP + H2O = ADP + phosphate + H(+). Its function is as follows. Involved in nuclear export of spliced and unspliced mRNA. Component of the TREX complex which is thought to couple mRNA transcription, processing and nuclear export, and specifically associates with spliced mRNA and not with unspliced pre-mRNA. The TREX complex is recruited to spliced mRNAs by a transcription-independent mechanism, binds to mRNA upstream of the exon-junction complex (EJC) and is recruited in a splicing- and cap-dependent manner to a region near the 5' end of the mRNA where it functions in mRNA export to the cytoplasm via the TAP/NXF1 pathway. The THOC1-THOC2-THOC3 core complex alone is sufficient to promote ATPase activity of DDX39B; in the complex THOC2 is the only component that directly interacts with DDX39B. Associates with SARNP/CIP29, which facilitates RNA binding of DDX39B and likely plays a role in mRNA export. May undergo several rounds of ATP hydrolysis during assembly of TREX to drive subsequent loading of components such as ALYREF/THOC4 and CHTOP onto mRNA. Also associates with pre-mRNA independent of ALYREF/THOC4. Involved in the nuclear export of intronless mRNA; the ATP-bound form is proposed to recruit export adapter ALYREF/THOC4 to intronless mRNA; its ATPase activity is cooperatively stimulated by RNA and ALYREF/THOC4 and ATP hydrolysis is thought to trigger the dissociation from RNA to allow the association of ALYREF/THOC4 and the NXF1-NXT1 heterodimer. Involved in transcription elongation and genome stability. In terms of biological role, splice factor that is required for the first ATP-dependent step in spliceosome assembly and for the interaction of U2 snRNP with the branchpoint. Has both RNA-stimulated ATP binding/hydrolysis activity and ATP-dependent RNA unwinding activity. Even with the stimulation of RNA, the ATPase activity is weak. Can only hydrolyze ATP but not other NTPs. The RNA stimulation of ATPase activity does not have a strong preference for the sequence and length of the RNA. However, ssRNA stimulates the ATPase activity much more strongly than dsRNA. Can unwind 5' or 3' overhangs or blunt end RNA duplexes in vitro. The ATPase and helicase activities are not influenced by U2AF2; the effect of ALYREF/THOC4 is reported conflictingly. The polypeptide is Spliceosome RNA helicase DDX39B (DDX39B) (Canis lupus familiaris (Dog)).